The sequence spans 542 residues: Chaperonin GroEL (542 aa).

ATP is bound by residues 29 to 32, K50, 86 to 90, G414, 477 to 479, and D493; these read TMGP, DGTTT, and NAA.

This sequence belongs to the chaperonin (HSP60) family. Forms a cylinder of 14 subunits composed of two heptameric rings stacked back-to-back. Interacts with the co-chaperonin GroES.

Its subcellular location is the cytoplasm. It catalyses the reaction ATP + H2O + a folded polypeptide = ADP + phosphate + an unfolded polypeptide.. In terms of biological role, together with its co-chaperonin GroES, plays an essential role in assisting protein folding. The GroEL-GroES system forms a nano-cage that allows encapsulation of the non-native substrate proteins and provides a physical environment optimized to promote and accelerate protein folding. This chain is Chaperonin GroEL, found in Sulfurimonas denitrificans (strain ATCC 33889 / DSM 1251) (Thiomicrospira denitrificans (strain ATCC 33889 / DSM 1251)).